A 257-amino-acid polypeptide reads, in one-letter code: Thioredoxin-dependent peroxide reductase, mitochondrial (257 aa).

The N-terminal 62 residues, 1–62 (MAAAAGRLLW…SAFSTSSSFH (62 aa)), are a transit peptide targeting the mitochondrion. Residues 64-222 (PAVTQHAPYF…TLRLVKAFQF (159 aa)) enclose the Thioredoxin domain. Residue K84 is modified to N6-succinyllysine. K92 bears the N6-acetyllysine; alternate mark. N6-succinyllysine; alternate is present on K92. Catalysis depends on C109, which acts as the Cysteine sulfenic acid (-SOH) intermediate. T147 is subject to Phosphothreonine.

The protein belongs to the peroxiredoxin family. AhpC/Prx1 subfamily. In terms of assembly, homodimer; disulfide-linked, upon oxidation. 6 homodimers assemble to form a ring-like dodecamer. Interacts with NEK6. Interacts with LRRK2. Interacts with MAP3K13. Interacts with RPS6KC1 (via PX domain). In terms of processing, phosphorylated by LRRK2; phosphorylation reduces perodixase activity. The enzyme can be inactivated by further oxidation of the cysteine sulfenic acid (C(P)-SOH) to sulphinic acid (C(P)-SO2H) and sulphonic acid (C(P)-SO3H) instead of its condensation to a disulfide bond. Post-translationally, S-palmitoylated. As to expression, housekeeping-type gene preferentially expressed in murine erythroleukemia (MEL) cells.

Its subcellular location is the mitochondrion. The protein localises to the cytoplasm. The protein resides in the early endosome. It carries out the reaction a hydroperoxide + [thioredoxin]-dithiol = an alcohol + [thioredoxin]-disulfide + H2O. Functionally, thiol-specific peroxidase that catalyzes the reduction of hydrogen peroxide and organic hydroperoxides to water and alcohols, respectively. Plays a role in cell protection against oxidative stress by detoxifying peroxides. Acts synergistically with MAP3K13 to regulate the activation of NF-kappa-B in the cytosol. Required for the maintenance of physical strength. This Mus musculus (Mouse) protein is Thioredoxin-dependent peroxide reductase, mitochondrial (Prdx3).